The following is a 259-amino-acid chain: Hydroxyacylglutathione hydrolase (259 aa).

Residues His-56, His-58, Asp-60, His-61, His-112, Asp-133, and His-171 each coordinate Zn(2+). Positions 224–238 (RTRETSVKEKADERS) are enriched in basic and acidic residues. Residues 224-245 (RTRETSVKEKADERSSGQNTSQ) are disordered.

This sequence belongs to the metallo-beta-lactamase superfamily. Glyoxalase II family. In terms of assembly, monomer. It depends on Zn(2+) as a cofactor.

The catalysed reaction is an S-(2-hydroxyacyl)glutathione + H2O = a 2-hydroxy carboxylate + glutathione + H(+). It functions in the pathway secondary metabolite metabolism; methylglyoxal degradation; (R)-lactate from methylglyoxal: step 2/2. In terms of biological role, thiolesterase that catalyzes the hydrolysis of S-D-lactoyl-glutathione to form glutathione and D-lactic acid. This Pseudomonas savastanoi pv. phaseolicola (strain 1448A / Race 6) (Pseudomonas syringae pv. phaseolicola (strain 1448A / Race 6)) protein is Hydroxyacylglutathione hydrolase.